A 440-amino-acid polypeptide reads, in one-letter code: COP9 signalosome complex subunit 4 (440 aa).

Positions serine 216–glutamate 386 constitute a PCI domain.

It belongs to the CSN4 family. In terms of assembly, component of the COP9 signalosome (CSN) complex.

The protein localises to the cytoplasm. Its subcellular location is the nucleus. Its function is as follows. Component of the COP9 signalosome (CSN) complex that acts as an regulator of the ubiquitin (Ubl) conjugation pathway by mediating the deneddylation of the cullin subunit of SCF-type E3 ubiquitin-protein ligase complexes. The CSN complex is involved in the regulation of the circadian clock through its control of the stability of the SCF(FWD1) complex. The protein is COP9 signalosome complex subunit 4 (csn-4) of Neurospora crassa (strain ATCC 24698 / 74-OR23-1A / CBS 708.71 / DSM 1257 / FGSC 987).